The primary structure comprises 167 residues: Sperm acrosome membrane-associated protein 3 (167 aa).

Residues 1–63 lie on the Cytoplasmic side of the membrane; that stretch reads MVSALREAPL…EARSRALRRR (63 aa). A helical; Signal-anchor for type II membrane protein membrane pass occupies residues 64 to 84; the sequence is WCPAGIILLALISLLSCLLPA. Residues 85-167 are Extracellular-facing; it reads SEAKVYGRCE…VPNVCQMYCS (83 aa). Residues 88–167 form the C-type lysozyme domain; sequence KVYGRCELAR…VPNVCQMYCS (80 aa). An intrachain disulfide couples Cys-151 to Cys-166.

It belongs to the glycosyl hydrolase 22 family. As to quaternary structure, interacts with ASTL. In terms of processing, the processed form derives from the membrane form by proteolytic processing.

It is found in the cytoplasmic vesicle. The protein localises to the secretory vesicle. The protein resides in the acrosome membrane. Functionally, sperm surface membrane protein that may be involved in sperm-egg plasma membrane adhesion and fusion during fertilization. It could be a potential receptor for the egg oligosaccharide residue N-acetylglucosamine, which is present in the extracellular matrix over the egg plasma membrane. The processed form has no detectable bacteriolytic activity in vitro. This is Sperm acrosome membrane-associated protein 3 (SPACA3) from Pongo pygmaeus (Bornean orangutan).